The following is a 560-amino-acid chain: DNA ligase B (560 aa).

Lys124 acts as the N6-AMP-lysine intermediate in catalysis.

Belongs to the NAD-dependent DNA ligase family. LigB subfamily.

The enzyme catalyses NAD(+) + (deoxyribonucleotide)n-3'-hydroxyl + 5'-phospho-(deoxyribonucleotide)m = (deoxyribonucleotide)n+m + AMP + beta-nicotinamide D-nucleotide.. Catalyzes the formation of phosphodiester linkages between 5'-phosphoryl and 3'-hydroxyl groups in double-stranded DNA using NAD as a coenzyme and as the energy source for the reaction. This Citrobacter koseri (strain ATCC BAA-895 / CDC 4225-83 / SGSC4696) protein is DNA ligase B.